Here is a 374-residue protein sequence, read N- to C-terminus: MKKKVIVGLSGGVDSSVAAYLLIQQGYEVEGLFMRNWDSSANNDILGNQEIDNDVCPQEQDYLDALEVANKLGIKLHRIDFVQEYWEYVFEYFIKEYKKGRTPNPDILCNKYIKFDKFLNHAINELKADYIAMGHYAGVRFNEKTKQYEMIRAVDTNKDQTYFLCQLTQNQLSKTLFPLQSLEKPEIRKIAAEQGLITADKKDSTGICFIGEREFTKFLQNYISNQPGDIVDIKTNEVLGKHIGAMYYTIGQRKGLNLGGMKEPYYVAAKDIDKKIIYVCPASDESYLLSNNAIVTEINWSLDLKQYIDNVEEFECTAKFRYRQPDVKVRLNKIKDNEYKVSYDAIVKAVTPGQEAVFYLNDICLGGGIIDIVE.

ATP contacts are provided by residues 8–15 (GLSGGVDS) and M34. The segment at 104 to 106 (NPD) is interaction with target base in tRNA. C109 (nucleophile) is an active-site residue. C109 and C208 form a disulfide bridge. Position 134 (G134) interacts with ATP. Positions 158-160 (KDQ) are interaction with tRNA. Residue C208 is the Cysteine persulfide intermediate of the active site. An interaction with tRNA region spans residues 321–322 (RY).

Belongs to the MnmA/TRMU family.

It localises to the cytoplasm. It catalyses the reaction S-sulfanyl-L-cysteinyl-[protein] + uridine(34) in tRNA + AH2 + ATP = 2-thiouridine(34) in tRNA + L-cysteinyl-[protein] + A + AMP + diphosphate + H(+). Functionally, catalyzes the 2-thiolation of uridine at the wobble position (U34) of tRNA, leading to the formation of s(2)U34. The chain is tRNA-specific 2-thiouridylase MnmA from Mesoplasma florum (strain ATCC 33453 / NBRC 100688 / NCTC 11704 / L1) (Acholeplasma florum).